A 359-amino-acid chain; its full sequence is EGF-like domain containing protein 2 (359 aa).

A signal peptide spans 1-20 (MPPFISHFFLLSTFASLALC). EGF-like domains follow at residues 21–55 (SFYC…FNCG) and 61–93 (ISAA…PTCQ). 6 disulfide bridges follow: Cys-24–Cys-37, Cys-31–Cys-43, Cys-45–Cys-54, Cys-65–Cys-75, Cys-69–Cys-81, and Cys-83–Cys-92.

In terms of tissue distribution, prismatic layer of shell (at protein level). Expressed primarily in the mantle with highest level in the mantle edge and lower level in the mantle pallium.

The protein resides in the secreted. The chain is EGF-like domain containing protein 2 from Margaritifera margaritifera (Freshwater pearl mussel).